The primary structure comprises 318 residues: MQWVEVEVLTTAEAVEAVAVILEDYGATGVVIEDSADLTRKWEDRYGEIYALDPANYPASGVRVRAYLPVVSWQEERAGEIQTRVKALAAVGLDPGAATVRYRLAREEEWAYGWQKYYHPVRVTKGLTIKPTWEEYTPSPGETVIEIDPGMAFGTGTHPTTILSLQALERVLKPGARVVDVGCGTGILALAAAKMGAGAVLALDLDPVAVAVARKNIARNGAADKVTVRNNDLLAGLEGPFDLVVANILAEVILKMIPDAGRVLPAGGTLIASGISRGKAGVVEDALLANGFAVEDTLTSGEWVTFIVRNLLPDPVEC.

T161, G182, D204, and N247 together coordinate S-adenosyl-L-methionine.

Belongs to the methyltransferase superfamily. PrmA family.

The protein localises to the cytoplasm. The catalysed reaction is L-lysyl-[protein] + 3 S-adenosyl-L-methionine = N(6),N(6),N(6)-trimethyl-L-lysyl-[protein] + 3 S-adenosyl-L-homocysteine + 3 H(+). Methylates ribosomal protein L11. In Moorella thermoacetica (strain ATCC 39073 / JCM 9320), this protein is Ribosomal protein L11 methyltransferase.